The following is a 150-amino-acid chain: Large ribosomal subunit protein bL9 (150 aa).

Belongs to the bacterial ribosomal protein bL9 family.

Its function is as follows. Binds to the 23S rRNA. This chain is Large ribosomal subunit protein bL9, found in Renibacterium salmoninarum (strain ATCC 33209 / DSM 20767 / JCM 11484 / NBRC 15589 / NCIMB 2235).